Consider the following 538-residue polypeptide: Thiamine transport system permease protein ThiP (538 aa).

Helical transmembrane passes span 19–39 (VVVI…IFAL), 57–77 (LILF…FFGL), 97–117 (LMSL…IGIY), 141–161 (LSGI…QLFL), 202–222 (FSLI…LGGG), 242–262 (LPKA…LFSL), 293–313 (ILVL…ILIS), 337–357 (LSIA…LLLL), 376–396 (AGMV…FLLL), 406–426 (LFII…LRIL), 466–486 (YAFA…ALFG), and 509–529 (AAVT…FIHT). The 206-residue stretch at 58–263 (ILFSFGQALL…VFCLILFSLT (206 aa)) folds into the ABC transmembrane type-1 1 domain. The region spanning 333–528 (LGYSLSIAPL…LCGILFAFIH (196 aa)) is the ABC transmembrane type-1 2 domain.

This sequence belongs to the binding-protein-dependent transport system permease family. CysTW subfamily. In terms of assembly, the complex is composed of two ATP-binding proteins (ThiQ), two transmembrane proteins (ThiP) and a solute-binding protein (ThiB).

The protein localises to the cell inner membrane. Functionally, part of the ABC transporter complex ThiBPQ involved in thiamine import. Probably responsible for the translocation of the substrate across the membrane. This chain is Thiamine transport system permease protein ThiP (thiP), found in Haemophilus influenzae (strain ATCC 51907 / DSM 11121 / KW20 / Rd).